The sequence spans 545 residues: RNA-directed RNA polymerase beta chain (545 aa).

Positions 243–373 (RLAQQGSVDG…PNLRKTFVSG (131 aa)) constitute a RdRp catalytic domain.

In terms of assembly, part of the viral RNA-dependent RNA polymerase complex, the other subunits are probably the host ribosomal protein S1, EF-Tu and EF-Ts.

The catalysed reaction is RNA(n) + a ribonucleoside 5'-triphosphate = RNA(n+1) + diphosphate. Functionally, this is the catalytic subunit of the viral RNA-dependent RNA polymerase complex. This complex is involved in viral RNA replication that produces (+)-stranded genomes via a complementary, (-)-stranded intermediate. The polypeptide is RNA-directed RNA polymerase beta chain (Escherichia coli (Bacteriophage MS2)).